Consider the following 79-residue polypeptide: RNA-binding protein Hfq (79 aa).

In terms of domain architecture, Sm spans 10 to 70 (DVFLKTVRKQ…ISTIMPGQPI (61 aa)).

The protein belongs to the Hfq family. In terms of assembly, homohexamer.

RNA chaperone that binds small regulatory RNA (sRNAs) and mRNAs to facilitate mRNA translational regulation in response to envelope stress, environmental stress and changes in metabolite concentrations. Also binds with high specificity to tRNAs. The sequence is that of RNA-binding protein Hfq from Bartonella bacilliformis (strain ATCC 35685 / KC583 / Herrer 020/F12,63).